The following is a 37-amino-acid chain: Large ribosomal subunit protein bL36 (37 aa).

The protein belongs to the bacterial ribosomal protein bL36 family.

This Geobacter metallireducens (strain ATCC 53774 / DSM 7210 / GS-15) protein is Large ribosomal subunit protein bL36.